A 272-amino-acid chain; its full sequence is Putative phosphatase HI_0597 (272 aa).

Residue D11 is the Nucleophile of the active site. D11 is a binding site for Mg(2+). Position 12 (L12) interacts with phosphate. D13 lines the Mg(2+) pocket. Residues 45 to 46 (TG) and K195 each bind phosphate. D218 contacts Mg(2+). N221 provides a ligand contact to phosphate.

Belongs to the HAD-like hydrolase superfamily. Cof family. The cofactor is Mg(2+).

The protein is Putative phosphatase HI_0597 of Haemophilus influenzae (strain ATCC 51907 / DSM 11121 / KW20 / Rd).